Reading from the N-terminus, the 43-residue chain is SPbeta prophage-derived uncharacterized protein YopG (43 aa).

This Bacillus subtilis (strain 168) protein is SPbeta prophage-derived uncharacterized protein YopG (yopG).